The chain runs to 272 residues: Undecaprenyl-diphosphatase (272 aa).

7 consecutive transmembrane segments (helical) span residues 42-62 (FGLS…VVFF), 92-112 (YLVL…EDFF), 120-140 (WVVV…EAVG), 149-169 (MGFA…VPGV), 194-214 (FLMS…EVLA), 224-244 (MFAV…RFFI), and 252-272 (LRAF…LLLL).

Belongs to the UppP family.

The protein resides in the cell membrane. It catalyses the reaction di-trans,octa-cis-undecaprenyl diphosphate + H2O = di-trans,octa-cis-undecaprenyl phosphate + phosphate + H(+). Its function is as follows. Catalyzes the dephosphorylation of undecaprenyl diphosphate (UPP). Confers resistance to bacitracin. The chain is Undecaprenyl-diphosphatase from Rubrobacter xylanophilus (strain DSM 9941 / JCM 11954 / NBRC 16129 / PRD-1).